A 203-amino-acid chain; its full sequence is Glycerol-3-phosphate acyltransferase (203 aa).

Residues 1–3 (MSA) lie on the Periplasmic side of the membrane. The chain crosses the membrane as a helical span at residues 4-24 (IAPGMILFAYLCGSISSAILV). Over 25-52 (CRIAGLPDPRESGSGNPGATNVLRIGGK) the chain is Cytoplasmic. A helical membrane pass occupies residues 53–73 (GAAVAVLIFDILKGMLPVWGA). Over 74–80 (YALGVTP) the chain is Periplasmic. Residues 81–101 (FWLGLIAIAACLGHIWPVFFG) form a helical membrane-spanning segment. Over 102 to 111 (FKGGKGVATA) the chain is Cytoplasmic. A helical transmembrane segment spans residues 112–132 (FGAIAPIGWDLTGVMAGTWLL). Over 133-137 (TVLLS) the chain is Periplasmic. Residues 138–158 (GYSSLGAIVSALIAPFYVWWF) form a helical membrane-spanning segment. Residues 159–203 (KPQFTFPVSMLSCLILLRHHDNIQRLWRRQETKIWTKLKKKRQKD) are Cytoplasmic-facing.

The protein belongs to the PlsY family. Probably interacts with PlsX.

It is found in the cell inner membrane. It catalyses the reaction sn-glycerol 3-phosphate + an acyl-CoA = a 1-acyl-sn-glycero-3-phosphate + CoA. The enzyme catalyses a fatty acyl-[ACP] + sn-glycerol 3-phosphate = a 1-acyl-sn-glycero-3-phosphate + holo-[ACP]. Its pathway is lipid metabolism; phospholipid metabolism. Catalyzes the transfer of an acyl group from acyl-ACP to glycerol-3-phosphate (G3P) to form lysophosphatidic acid (LPA). This enzyme can also utilize acyl-CoA as fatty acyl donor, but not acyl-PO(4). This Salmonella agona (strain SL483) protein is Glycerol-3-phosphate acyltransferase.